The primary structure comprises 309 residues: Ribosomal protein L11 methyltransferase (309 aa).

The S-adenosyl-L-methionine site is built by threonine 144, glycine 165, aspartate 187, and asparagine 235.

This sequence belongs to the methyltransferase superfamily. PrmA family.

It is found in the cytoplasm. It carries out the reaction L-lysyl-[protein] + 3 S-adenosyl-L-methionine = N(6),N(6),N(6)-trimethyl-L-lysyl-[protein] + 3 S-adenosyl-L-homocysteine + 3 H(+). Functionally, methylates ribosomal protein L11. In Prochlorococcus marinus (strain MIT 9215), this protein is Ribosomal protein L11 methyltransferase.